A 372-amino-acid polypeptide reads, in one-letter code: Probable dual-specificity RNA methyltransferase RlmN (372 aa).

A disordered region spans residues 1-20 (MTSLPLTPVNPDAPARRAAM). Glu-112 serves as the catalytic Proton acceptor. The region spanning 118–357 (YPDRVTVCLS…STTVRDTRGR (240 aa)) is the Radical SAM core domain. Residues Cys-125 and Cys-363 are joined by a disulfide bond. [4Fe-4S] cluster-binding residues include Cys-132, Cys-136, and Cys-139. Residues 187–188 (GE), Ser-221, 244–246 (SLH), and Asn-320 each bind S-adenosyl-L-methionine. Cys-363 serves as the catalytic S-methylcysteine intermediate.

This sequence belongs to the radical SAM superfamily. RlmN family. [4Fe-4S] cluster serves as cofactor.

Its subcellular location is the cytoplasm. It catalyses the reaction adenosine(2503) in 23S rRNA + 2 reduced [2Fe-2S]-[ferredoxin] + 2 S-adenosyl-L-methionine = 2-methyladenosine(2503) in 23S rRNA + 5'-deoxyadenosine + L-methionine + 2 oxidized [2Fe-2S]-[ferredoxin] + S-adenosyl-L-homocysteine. The catalysed reaction is adenosine(37) in tRNA + 2 reduced [2Fe-2S]-[ferredoxin] + 2 S-adenosyl-L-methionine = 2-methyladenosine(37) in tRNA + 5'-deoxyadenosine + L-methionine + 2 oxidized [2Fe-2S]-[ferredoxin] + S-adenosyl-L-homocysteine. Specifically methylates position 2 of adenine 2503 in 23S rRNA and position 2 of adenine 37 in tRNAs. In Salinispora tropica (strain ATCC BAA-916 / DSM 44818 / JCM 13857 / NBRC 105044 / CNB-440), this protein is Probable dual-specificity RNA methyltransferase RlmN.